The following is a 493-amino-acid chain: Lysine--tRNA ligase (493 aa).

Mg(2+) is bound by residues Glu-406 and Glu-413.

Belongs to the class-II aminoacyl-tRNA synthetase family. In terms of assembly, homodimer. Mg(2+) is required as a cofactor.

It is found in the cytoplasm. The enzyme catalyses tRNA(Lys) + L-lysine + ATP = L-lysyl-tRNA(Lys) + AMP + diphosphate. The chain is Lysine--tRNA ligase from Leuconostoc citreum (strain KM20).